The primary structure comprises 402 residues: S-adenosylmethionine synthase (402 aa).

Position 15 (histidine 15) interacts with ATP. Position 17 (aspartate 17) interacts with Mg(2+). Glutamate 43 contacts K(+). Residues glutamate 56 and glutamine 99 each contribute to the L-methionine site. The interval 99–109 (QSPDIAQGVDT) is flexible loop. Residues 174–176 (DGK), 247–248 (RF), aspartate 256, 262–263 (RK), alanine 279, and lysine 283 each bind ATP. Aspartate 256 serves as a coordination point for L-methionine. Lysine 287 contributes to the L-methionine binding site.

This sequence belongs to the AdoMet synthase family. Homotetramer; dimer of dimers. The cofactor is Mg(2+). It depends on K(+) as a cofactor.

It is found in the cytoplasm. The catalysed reaction is L-methionine + ATP + H2O = S-adenosyl-L-methionine + phosphate + diphosphate. Its pathway is amino-acid biosynthesis; S-adenosyl-L-methionine biosynthesis; S-adenosyl-L-methionine from L-methionine: step 1/1. In terms of biological role, catalyzes the formation of S-adenosylmethionine (AdoMet) from methionine and ATP. The overall synthetic reaction is composed of two sequential steps, AdoMet formation and the subsequent tripolyphosphate hydrolysis which occurs prior to release of AdoMet from the enzyme. The chain is S-adenosylmethionine synthase from Streptomyces griseus subsp. griseus (strain JCM 4626 / CBS 651.72 / NBRC 13350 / KCC S-0626 / ISP 5235).